A 287-amino-acid chain; its full sequence is ATP synthase gamma chain (287 aa).

It belongs to the ATPase gamma chain family. As to quaternary structure, F-type ATPases have 2 components, CF(1) - the catalytic core - and CF(0) - the membrane proton channel. CF(1) has five subunits: alpha(3), beta(3), gamma(1), delta(1), epsilon(1). CF(0) has three main subunits: a, b and c.

The protein localises to the cell inner membrane. Produces ATP from ADP in the presence of a proton gradient across the membrane. The gamma chain is believed to be important in regulating ATPase activity and the flow of protons through the CF(0) complex. The sequence is that of ATP synthase gamma chain from Ruthia magnifica subsp. Calyptogena magnifica.